We begin with the raw amino-acid sequence, 286 residues long: 4-hydroxybenzoate octaprenyltransferase (286 aa).

The next 7 membrane-spanning stretches (helical) occupy residues 20 to 40, 43 to 63, 95 to 115, 142 to 162, 167 to 187, 210 to 230, and 234 to 254; these read IGTL…AGGM, LKVL…GCII, ILFA…NPLV, FLGV…TGEV, WWLF…YAMV, QIIG…GWAA, and LVYG…QKLI.

It belongs to the UbiA prenyltransferase family. The cofactor is Mg(2+).

The protein localises to the cell inner membrane. The catalysed reaction is all-trans-octaprenyl diphosphate + 4-hydroxybenzoate = 4-hydroxy-3-(all-trans-octaprenyl)benzoate + diphosphate. It participates in cofactor biosynthesis; ubiquinone biosynthesis. In terms of biological role, catalyzes the prenylation of para-hydroxybenzoate (PHB) with an all-trans polyprenyl group. Mediates the second step in the final reaction sequence of ubiquinone-8 (UQ-8) biosynthesis, which is the condensation of the polyisoprenoid side chain with PHB, generating the first membrane-bound Q intermediate 3-octaprenyl-4-hydroxybenzoate. The polypeptide is 4-hydroxybenzoate octaprenyltransferase (Shewanella sediminis (strain HAW-EB3)).